The chain runs to 21 residues: Cupiennin-6d (21 aa).

The residue at position 21 (Ser21) is a Serine amide.

As to expression, expressed by the venom gland.

It is found in the secreted. This is Cupiennin-6d from Cupiennius salei (American wandering spider).